Consider the following 604-residue polypeptide: Sulfite reductase [NADPH] flavoprotein alpha-component (604 aa).

Residues 66-204 form the Flavodoxin-like domain; the sequence is VTVLSASQTG…AADGWTGRIV (139 aa). FMN is bound by residues 72 to 77, 119 to 122, and 155 to 164; these read SQTGNA, STQG, and LGDSSYPNFC. The interval 212 to 231 is disordered; sequence AKNRATPAPQTTPPAGLQTA. A compositionally biased stretch (low complexity) spans 216–231; that stretch reads ATPAPQTTPPAGLQTA. Positions 239–453 constitute an FAD-binding FR-type domain; the sequence is ADPFPAALLA…VERNDGFRLP (215 aa). FAD-binding positions include T327, Q361, 391 to 394, 409 to 411, and 424 to 427; these read RLYS, TVG, and GGAS. NADP(+) is bound by residues 524–525, 530–534, and D566; these read SR and KIYVQ. Y604 contributes to the FAD binding site.

Belongs to the NADPH-dependent sulphite reductase flavoprotein subunit CysJ family. The protein in the N-terminal section; belongs to the flavodoxin family. It in the C-terminal section; belongs to the flavoprotein pyridine nucleotide cytochrome reductase family. In terms of assembly, alpha(8)-beta(8). The alpha component is a flavoprotein, the beta component is a hemoprotein. FAD serves as cofactor. The cofactor is FMN.

It carries out the reaction hydrogen sulfide + 3 NADP(+) + 3 H2O = sulfite + 3 NADPH + 4 H(+). It functions in the pathway sulfur metabolism; hydrogen sulfide biosynthesis; hydrogen sulfide from sulfite (NADPH route): step 1/1. In terms of biological role, component of the sulfite reductase complex that catalyzes the 6-electron reduction of sulfite to sulfide. This is one of several activities required for the biosynthesis of L-cysteine from sulfate. The flavoprotein component catalyzes the electron flow from NADPH -&gt; FAD -&gt; FMN to the hemoprotein component. The chain is Sulfite reductase [NADPH] flavoprotein alpha-component from Neisseria meningitidis serogroup C / serotype 2a (strain ATCC 700532 / DSM 15464 / FAM18).